A 243-amino-acid chain; its full sequence is UPF0246 protein Spy49_1742 (243 aa).

It belongs to the UPF0246 family.

In Streptococcus pyogenes serotype M49 (strain NZ131), this protein is UPF0246 protein Spy49_1742.